Reading from the N-terminus, the 465-residue chain is Argininosuccinate lyase (465 aa).

This sequence belongs to the lyase 1 family. Argininosuccinate lyase subfamily.

The protein localises to the cytoplasm. It catalyses the reaction 2-(N(omega)-L-arginino)succinate = fumarate + L-arginine. Its pathway is amino-acid biosynthesis; L-arginine biosynthesis; L-arginine from L-ornithine and carbamoyl phosphate: step 3/3. The sequence is that of Argininosuccinate lyase from Halorhodospira halophila (strain DSM 244 / SL1) (Ectothiorhodospira halophila (strain DSM 244 / SL1)).